Reading from the N-terminus, the 342-residue chain is Isopentenyl-diphosphate delta-isomerase (342 aa).

12 to 13 (RK) is a substrate binding site. FMN-binding positions include 71-73 (AMT), S101, and N129. 101-103 (SQR) provides a ligand contact to substrate. Substrate is bound at residue Q163. E164 contributes to the Mg(2+) binding site. FMN contacts are provided by residues K195, T225, 272 to 274 (GIR), and 293 to 294 (AR).

This sequence belongs to the IPP isomerase type 2 family. Homooctamer. Dimer of tetramers. The cofactor is FMN. NADPH is required as a cofactor. Mg(2+) serves as cofactor.

It localises to the cytoplasm. The enzyme catalyses isopentenyl diphosphate = dimethylallyl diphosphate. In terms of biological role, involved in the biosynthesis of isoprenoids. Catalyzes the 1,3-allylic rearrangement of the homoallylic substrate isopentenyl (IPP) to its allylic isomer, dimethylallyl diphosphate (DMAPP). In Mycolicibacterium vanbaalenii (strain DSM 7251 / JCM 13017 / BCRC 16820 / KCTC 9966 / NRRL B-24157 / PYR-1) (Mycobacterium vanbaalenii), this protein is Isopentenyl-diphosphate delta-isomerase.